A 495-amino-acid chain; its full sequence is Probable lysine-specific demethylase 4A (495 aa).

In terms of domain architecture, JmjN spans 18–60 (IMTFRPSYEEFQNFSAYIEYIESRGAHLAGLAKIQPPAEWVPR). Position 139 (Y139) interacts with 2-oxoglutarate. The JmjC domain maps to 149 to 315 (DEDLDVWNIG…YGKRASICRC (167 aa)). Fe cation-binding residues include H195 and E197. 2-oxoglutarate-binding residues include N205 and K213. C241 and H247 together coordinate Zn(2+). K248 is a 2-oxoglutarate binding site. H283 is a binding site for Fe cation. The Zn(2+) site is built by C313 and C315. S409 carries the post-translational modification Phosphoserine.

This sequence belongs to the JHDM3 histone demethylase family. Fe(2+) is required as a cofactor.

The protein localises to the nucleus. It catalyses the reaction N(6),N(6),N(6)-trimethyl-L-lysyl(9)-[histone H3] + 2 2-oxoglutarate + 2 O2 = N(6)-methyl-L-lysyl(9)-[histone H3] + 2 formaldehyde + 2 succinate + 2 CO2. The enzyme catalyses N(6),N(6),N(6)-trimethyl-L-lysyl(36)-[histone H3] + 2 2-oxoglutarate + 2 O2 = N(6)-methyl-L-lysyl(36)-[histone H3] + 2 formaldehyde + 2 succinate + 2 CO2. In terms of biological role, probable histone demethylase that specifically demethylates 'Lys-9' and 'Lys-36' residues of histone H3, thereby playing a central role in histone code. Demethylation of Lys residue generates formaldehyde and succinate. The sequence is that of Probable lysine-specific demethylase 4A (Kdm4A) from Drosophila melanogaster (Fruit fly).